A 150-amino-acid chain; its full sequence is Suppressor of HU sensitivity involved in recombination protein 1 (150 aa).

In terms of assembly, component of the SHU complex composed of at least CSM2, PSY3, SHU1 and SHU2.

The protein resides in the nucleus. Its function is as follows. Plays a role in a RAD51/RAD54-dependent homologous recombination repair (HRR) pathway to repair MMS-induced lesions during S-phase. The chain is Suppressor of HU sensitivity involved in recombination protein 1 (SHU1) from Saccharomyces cerevisiae (strain ATCC 204508 / S288c) (Baker's yeast).